Here is a 194-residue protein sequence, read N- to C-terminus: Recombination protein RecR (194 aa).

The C4-type zinc-finger motif lies at 55–70 (CRECGNLAEGELCPIC). The Toprim domain occupies 78–171 (SLLAVVESVA…RVTRPAYGLP (94 aa)).

Belongs to the RecR family.

May play a role in DNA repair. It seems to be involved in an RecBC-independent recombinational process of DNA repair. It may act with RecF and RecO. In Thermus thermophilus (strain ATCC 27634 / DSM 579 / HB8), this protein is Recombination protein RecR.